The chain runs to 126 residues: Alpha-lactalbumin (126 aa).

Residues 1 to 126 form the C-type lysozyme domain; that stretch reads KVFEKCELSQ…CIADLDQWKC (126 aa). 4 disulfide bridges follow: C6–C126, C30–C117, C63–C82, and C78–C96. N-linked (GlcNAc...) asparagine glycosylation occurs at N47. Positions 84, 87, 89, 92, and 93 each coordinate Ca(2+).

This sequence belongs to the glycosyl hydrolase 22 family. Lactose synthase (LS) is a heterodimer of a catalytic component, beta1,4-galactosyltransferase (beta4Gal-T1) and a regulatory component, alpha-lactalbumin (LA). Mammary gland specific. Secreted in milk.

The protein resides in the secreted. Functionally, regulatory subunit of lactose synthase, changes the substrate specificity of galactosyltransferase in the mammary gland making glucose a good acceptor substrate for this enzyme. This enables LS to synthesize lactose, the major carbohydrate component of milk. In other tissues, galactosyltransferase transfers galactose onto the N-acetylglucosamine of the oligosaccharide chains in glycoproteins. In Tachyglossus aculeatus aculeatus (Southeast Australian short-beaked echidna), this protein is Alpha-lactalbumin (LALBA).